Consider the following 336-residue polypeptide: NADH-quinone oxidoreductase subunit H (336 aa).

The next 8 membrane-spanning stretches (helical) occupy residues 17–37 (WFII…TYAI), 85–105 (ALFT…LAVM), 116–136 (LGIG…GVIT), 154–174 (AAQM…IVLL), 190–210 (VWNI…AQAE), 247–267 (VYMF…WLPI), 274–294 (IPGI…QFWI), and 309–329 (FAWK…AVVV).

Belongs to the complex I subunit 1 family. As to quaternary structure, NDH-1 is composed of 14 different subunits. Subunits NuoA, H, J, K, L, M, N constitute the membrane sector of the complex.

It localises to the cell membrane. It catalyses the reaction a quinone + NADH + 5 H(+)(in) = a quinol + NAD(+) + 4 H(+)(out). In terms of biological role, NDH-1 shuttles electrons from NADH, via FMN and iron-sulfur (Fe-S) centers, to quinones in the respiratory chain. The immediate electron acceptor for the enzyme in this species is believed to be ubiquinone. Couples the redox reaction to proton translocation (for every two electrons transferred, four hydrogen ions are translocated across the cytoplasmic membrane), and thus conserves the redox energy in a proton gradient. This subunit may bind ubiquinone. This is NADH-quinone oxidoreductase subunit H from Brevibacillus brevis (strain 47 / JCM 6285 / NBRC 100599).